The sequence spans 203 residues: GTP cyclohydrolase 1 (203 aa).

Residues cysteine 87, histidine 90, and cysteine 158 each contribute to the Zn(2+) site.

This sequence belongs to the GTP cyclohydrolase I family. Toroid-shaped homodecamer, composed of two pentamers of five dimers.

The enzyme catalyses GTP + H2O = 7,8-dihydroneopterin 3'-triphosphate + formate + H(+). It participates in cofactor biosynthesis; 7,8-dihydroneopterin triphosphate biosynthesis; 7,8-dihydroneopterin triphosphate from GTP: step 1/1. This chain is GTP cyclohydrolase 1, found in Xylella fastidiosa (strain 9a5c).